Reading from the N-terminus, the 837-residue chain is Protein translocase subunit SecA (837 aa).

Residues glutamine 85, 103–107, and aspartate 493 each bind ATP; that span reads GEGKT. The Zn(2+) site is built by cysteine 821, cysteine 823, cysteine 832, and histidine 833.

This sequence belongs to the SecA family. Monomer and homodimer. Part of the essential Sec protein translocation apparatus which comprises SecA, SecYEG and auxiliary proteins SecDF. Other proteins may also be involved. Zn(2+) is required as a cofactor.

It localises to the cell membrane. It is found in the cytoplasm. It catalyses the reaction ATP + H2O + cellular proteinSide 1 = ADP + phosphate + cellular proteinSide 2.. In terms of biological role, part of the Sec protein translocase complex. Interacts with the SecYEG preprotein conducting channel. Has a central role in coupling the hydrolysis of ATP to the transfer of proteins into and across the cell membrane, serving as an ATP-driven molecular motor driving the stepwise translocation of polypeptide chains across the membrane. This chain is Protein translocase subunit SecA, found in Streptococcus pneumoniae serotype 19F (strain G54).